The primary structure comprises 570 residues: Sulfite reductase [NADPH] hemoprotein beta-component (570 aa).

[4Fe-4S] cluster is bound by residues cysteine 434, cysteine 440, cysteine 479, and cysteine 483. Residue cysteine 483 coordinates siroheme.

It belongs to the nitrite and sulfite reductase 4Fe-4S domain family. Alpha(8)-beta(8). The alpha component is a flavoprotein, the beta component is a hemoprotein. Requires siroheme as cofactor. [4Fe-4S] cluster is required as a cofactor.

It carries out the reaction hydrogen sulfide + 3 NADP(+) + 3 H2O = sulfite + 3 NADPH + 4 H(+). Its pathway is sulfur metabolism; hydrogen sulfide biosynthesis; hydrogen sulfide from sulfite (NADPH route): step 1/1. Functionally, component of the sulfite reductase complex that catalyzes the 6-electron reduction of sulfite to sulfide. This is one of several activities required for the biosynthesis of L-cysteine from sulfate. This chain is Sulfite reductase [NADPH] hemoprotein beta-component, found in Salmonella heidelberg (strain SL476).